A 620-amino-acid polypeptide reads, in one-letter code: Arginine--tRNA ligase (620 aa).

The 'HIGH' region signature appears at 147 to 157 (ANPTGPIHIGG).

The protein belongs to the class-I aminoacyl-tRNA synthetase family. Monomer.

Its subcellular location is the cytoplasm. It carries out the reaction tRNA(Arg) + L-arginine + ATP = L-arginyl-tRNA(Arg) + AMP + diphosphate. This chain is Arginine--tRNA ligase, found in Bifidobacterium longum (strain NCC 2705).